The primary structure comprises 433 residues: Tol-Pal system protein TolB (433 aa).

The N-terminal stretch at 1–26 (MSLMTKLGFRALVASCLIAAGGAAHA) is a signal peptide.

Belongs to the TolB family. In terms of assembly, the Tol-Pal system is composed of five core proteins: the inner membrane proteins TolA, TolQ and TolR, the periplasmic protein TolB and the outer membrane protein Pal. They form a network linking the inner and outer membranes and the peptidoglycan layer.

The protein localises to the periplasm. In terms of biological role, part of the Tol-Pal system, which plays a role in outer membrane invagination during cell division and is important for maintaining outer membrane integrity. The chain is Tol-Pal system protein TolB from Burkholderia pseudomallei (strain 1710b).